The primary structure comprises 214 residues: Heat shock 70 kDa protein cognate 1 (214 aa).

The protein belongs to the heat shock protein 70 family.

The protein is Heat shock 70 kDa protein cognate 1 (Hsc70-1) of Drosophila simulans (Fruit fly).